The following is a 203-amino-acid chain: Pyridoxine/pyridoxamine 5'-phosphate oxidase (203 aa).

FMN contacts are provided by residues 51 to 56 (RMVLLK), 66 to 67 (YT), Arg72, Lys73, and Gln95. Lys56 is a substrate binding site. The substrate site is built by Tyr113, Arg117, and Ser121. FMN contacts are provided by residues 130–131 (QS) and Trp175. 181-183 (RLH) serves as a coordination point for substrate. Arg185 provides a ligand contact to FMN.

The protein belongs to the pyridoxamine 5'-phosphate oxidase family. In terms of assembly, homodimer. FMN is required as a cofactor.

The enzyme catalyses pyridoxamine 5'-phosphate + O2 + H2O = pyridoxal 5'-phosphate + H2O2 + NH4(+). It carries out the reaction pyridoxine 5'-phosphate + O2 = pyridoxal 5'-phosphate + H2O2. The protein operates within cofactor metabolism; pyridoxal 5'-phosphate salvage; pyridoxal 5'-phosphate from pyridoxamine 5'-phosphate: step 1/1. It functions in the pathway cofactor metabolism; pyridoxal 5'-phosphate salvage; pyridoxal 5'-phosphate from pyridoxine 5'-phosphate: step 1/1. Catalyzes the oxidation of either pyridoxine 5'-phosphate (PNP) or pyridoxamine 5'-phosphate (PMP) into pyridoxal 5'-phosphate (PLP). The protein is Pyridoxine/pyridoxamine 5'-phosphate oxidase of Novosphingobium aromaticivorans (strain ATCC 700278 / DSM 12444 / CCUG 56034 / CIP 105152 / NBRC 16084 / F199).